The sequence spans 90 residues: Large ribosomal subunit protein bL27 (90 aa).

The interval 1–20 (MAHKKAGGSSRNGRDSAGKR) is disordered.

Belongs to the bacterial ribosomal protein bL27 family.

The protein is Large ribosomal subunit protein bL27 of Rhodopseudomonas palustris (strain BisB18).